The following is a 351-amino-acid chain: tRNA (guanine(10)-N2)-dimethyltransferase (351 aa).

A THUMP domain is found at E57–L165.

The protein belongs to the methyltransferase superfamily. Trm-G10 family. Monomer.

The protein localises to the cytoplasm. It carries out the reaction guanosine(10) in tRNA + 2 S-adenosyl-L-methionine = N(2)-dimethylguanosine(10) in tRNA + 2 S-adenosyl-L-homocysteine + 2 H(+). Functionally, catalyzes the adenosylmethionine-dependent methylation of the exocyclic amino group (N(2)) of guanosine at position 10 of various tRNAs. Acts via a two-step process that leads to the formation of either N(2)-monomethyl (m(2)G) or N(2)-dimethylguanosine (m(2)(2)G). The polypeptide is tRNA (guanine(10)-N2)-dimethyltransferase (trmG10) (Methanocaldococcus jannaschii (strain ATCC 43067 / DSM 2661 / JAL-1 / JCM 10045 / NBRC 100440) (Methanococcus jannaschii)).